The chain runs to 243 residues: Triosephosphate isomerase (243 aa).

Asn-9–Lys-11 is a substrate binding site. Catalysis depends on His-96, which acts as the Electrophile. Glu-165 (proton acceptor) is an active-site residue. Residues Gly-171, Ser-204, and Gly-225 to Gly-226 contribute to the substrate site.

Belongs to the triosephosphate isomerase family. As to quaternary structure, homodimer.

Its subcellular location is the cytoplasm. It carries out the reaction D-glyceraldehyde 3-phosphate = dihydroxyacetone phosphate. It functions in the pathway carbohydrate biosynthesis; gluconeogenesis. Its pathway is carbohydrate degradation; glycolysis; D-glyceraldehyde 3-phosphate from glycerone phosphate: step 1/1. Its function is as follows. Involved in the gluconeogenesis. Catalyzes stereospecifically the conversion of dihydroxyacetone phosphate (DHAP) to D-glyceraldehyde-3-phosphate (G3P). This Prochlorococcus marinus (strain MIT 9313) protein is Triosephosphate isomerase.